Consider the following 338-residue polypeptide: MQQQLDALQLEALKAIREAADLTILERIRVDFLGKKGKLSALLGGMARLPAEERPVVGALVNQVKARVEEALAAQQTHLQDQLIELRLVAEALDVTMPGRFVPPGRLHPLTATTDRIVDVFVGLGFTVASGPQIETEYYNFEALNTPADHPARDMQDTFYLSDGLVLRTQTSSVQIRYMEENDPPVRICVPGRVYRRDQVTNRHSPVFHQLELLAVDEEITFGDLKGTLTFFTQEMFGDRPVRFRPSFFPFTEPSAEVDVQCRFCDGKGCRTCSHTGWLEIAGCGMVDPNVFQAVGYNPEKVQGFAAGMGIERIAMLLYDINDIRLFYTNDLRFLRQF.

E253 lines the Mg(2+) pocket.

It belongs to the class-II aminoacyl-tRNA synthetase family. Phe-tRNA synthetase alpha subunit type 1 subfamily. As to quaternary structure, tetramer of two alpha and two beta subunits. Requires Mg(2+) as cofactor.

It localises to the cytoplasm. It catalyses the reaction tRNA(Phe) + L-phenylalanine + ATP = L-phenylalanyl-tRNA(Phe) + AMP + diphosphate + H(+). This Gloeobacter violaceus (strain ATCC 29082 / PCC 7421) protein is Phenylalanine--tRNA ligase alpha subunit.